The primary structure comprises 555 residues: Coiled-coil domain-containing protein 102A (555 aa).

3 disordered regions span residues 1 to 68 (MSHG…ADGD), 136 to 202 (LAGA…GSQE), and 214 to 254 (PEEP…EEDA). 3 positions are modified to phosphoserine: serine 12, serine 26, and serine 28. Positions 37-61 (SLPPTPPSGTPSPGPPPALPLPPTP) are enriched in pro residues. Residues 72-161 (REELRLRELE…ARGRELARLR (90 aa)) are a coiled coil. 2 stretches are compositionally biased toward basic and acidic residues: residues 136 to 159 (LAGARRERQEAQGESEARGRELAR) and 166 to 183 (GVDRTPDGPETEPEREQE). Residues 224-236 (RSAGAGAPRGSSG) show a composition bias toward low complexity. Coiled coils occupy residues 268-401 (QKVL…RRQT) and 432-522 (KLKK…QNAP). The segment at 478 to 555 (ELDEAHNQAR…EDEDLQIQVA (78 aa)) is disordered. Residues 536–555 (EAGDGASDLDEDEDLQIQVA) show a composition bias toward acidic residues. Serine 542 is subject to Phosphoserine.

This Bos taurus (Bovine) protein is Coiled-coil domain-containing protein 102A (CCDC102A).